Here is a 441-residue protein sequence, read N- to C-terminus: UPF0761 membrane protein Clim_1521 (441 aa).

Transmembrane regions (helical) follow at residues 54–74 (IFLS…PFLA), 122–142 (TVPL…ISTI), 161–181 (AFTL…SSLG), 203–223 (LISF…YMLV), 233–253 (AFSG…WFVF), and 266–286 (GAIS…LVVL).

Belongs to the UPF0761 family.

It localises to the cell inner membrane. The sequence is that of UPF0761 membrane protein Clim_1521 from Chlorobium limicola (strain DSM 245 / NBRC 103803 / 6330).